The primary structure comprises 162 residues: MNVTAIYPGTFDPITLGHADLVGRASRIFDRVILAVAESKAKTPLFDFGERLALAREAVAEMPNVEVVGFNSLLVDCARTHGATVILRGLRAVSDFEFEFQMAGMNRSLGPEIETIFLTPGESYAFLSSSVIREIAKFGGDVSAFVPGHVRAALMRKFAGSG.

Residue T10 participates in substrate binding. Residues 10–11 (TF) and H18 each bind ATP. 3 residues coordinate substrate: K42, L74, and R88. ATP is bound by residues 89–91 (GLR), E99, and 124–130 (YAFLSSS).

Belongs to the bacterial CoaD family. As to quaternary structure, homohexamer. It depends on Mg(2+) as a cofactor.

It is found in the cytoplasm. It catalyses the reaction (R)-4'-phosphopantetheine + ATP + H(+) = 3'-dephospho-CoA + diphosphate. It functions in the pathway cofactor biosynthesis; coenzyme A biosynthesis; CoA from (R)-pantothenate: step 4/5. Functionally, reversibly transfers an adenylyl group from ATP to 4'-phosphopantetheine, yielding dephospho-CoA (dPCoA) and pyrophosphate. The polypeptide is Phosphopantetheine adenylyltransferase (Methylococcus capsulatus (strain ATCC 33009 / NCIMB 11132 / Bath)).